Reading from the N-terminus, the 501-residue chain is Aldehyde dehydrogenase, cytosolic 1 (501 aa).

At S2 the chain carries N-acetylserine. N6-acetyllysine is present on residues K91 and K128. 246-251 (GSTEVG) lines the NAD(+) pocket. At K252 the chain carries N6-acetyllysine. The active-site Proton acceptor is the E269. Catalysis depends on C303, which acts as the Nucleophile. An N6-acetyllysine mark is found at K353, K367, and K410. Phosphoserine is present on S413. N6-acetyllysine occurs at positions 419 and 435.

This sequence belongs to the aldehyde dehydrogenase family. As to quaternary structure, homotetramer. In terms of tissue distribution, highest level in liver, high level in lung, low level in kidney and testis.

The protein localises to the cytoplasm. It catalyses the reaction an aldehyde + NAD(+) + H2O = a carboxylate + NADH + 2 H(+). Its pathway is alcohol metabolism; ethanol degradation; acetate from ethanol: step 2/2. In terms of biological role, can oxidize benzaldehyde, propionaldehyde and acetaldehyde. No detectable activity with retinal. This Mus musculus (Mouse) protein is Aldehyde dehydrogenase, cytosolic 1.